Here is a 73-residue protein sequence, read N- to C-terminus: Homeodomain-only protein (73 aa).

Residues 3–62 (AEPANGPTEDQVEILEYNFNKVNRHPDPTTLCLIAAEAGLSEEETQKWFKQRLAQWRRSE) constitute a DNA-binding region (homeobox; degenerate).

In terms of assembly, interacts with serum response factor (SRF). Component of a large complex containing histone deacetylases such as HDAC2. Interacts with the acetylated forms of HSPA1A and HSPA1B. Interacts with HSPA8.

The protein resides in the nucleus. Its subcellular location is the cytoplasm. In terms of biological role, atypical homeodomain protein which does not bind DNA and is required to modulate cardiac growth and development. Acts via its interaction with SRF, thereby modulating the expression of SRF-dependent cardiac-specific genes and cardiac development. Prevents SRF-dependent transcription either by inhibiting SRF binding to DNA or by recruiting histone deacetylase (HDAC) proteins that prevent transcription by SRF. Overexpression causes cardiac hypertrophy. Acts as a co-chaperone for HSPA1A and HSPA1B chaperone proteins and assists in chaperone-mediated protein refolding. The sequence is that of Homeodomain-only protein (HOPX) from Sus scrofa (Pig).